Here is a 1323-residue protein sequence, read N- to C-terminus: Traf2 and NCK-interacting protein kinase (1323 aa).

The region spanning 25 to 289 (FELVELVGNG…TEQLMKHPFI (265 aa)) is the Protein kinase domain. ATP is bound by residues 31–39 (VGNGTYGQV) and lysine 54. The active-site Proton acceptor is aspartate 153. Threonine 187 bears the Phosphothreonine mark. Disordered stretches follow at residues 284–347 (MKHP…LPGE), 397–559 (EQKE…LRPV), and 571–838 (SQGP…NEQY). Positions 288–307 (FIRDQPNERQVRIQLKDHID) are enriched in basic and acidic residues. Residues 290–1010 (RDQPNERQVR…EIRKYKKRFN (721 aa)) are mediates interaction with NEDD4. The span at 317 to 335 (DETEYEYSGSEEEEEENDS) shows a compositional bias: acidic residues. Phosphoserine occurs at positions 324 and 326. Composition is skewed to basic and acidic residues over residues 397-470 (EQKE…ERDY), 477-494 (QRQE…HYKE), and 503-513 (AWAKEVEERSR). Serine 531 and serine 541 each carry phosphoserine. Phosphothreonine is present on threonine 552. A phosphoserine mark is found at serine 571, serine 579, serine 581, and serine 611. Basic and acidic residues predominate over residues 623 to 640 (RIEKFDRSSWLRQEEDIP). A phosphoserine mark is found at serine 649, serine 651, serine 659, serine 672, serine 678, serine 691, serine 735, serine 737, and serine 740. The span at 691 to 726 (SSLQRTSSGSSSSSSTPSSQPSSQGGSQPGSQAGSS) shows a compositional bias: low complexity. Composition is skewed to basic and acidic residues over residues 746 to 760 (EPSK…DITR) and 772 to 790 (KELR…KKVT). Acidic residues predominate over residues 797 to 810 (EESESSEEEEEDGE). Serine 922 carries the post-translational modification Phosphoserine. Residues 939–960 (FVDPRVYQTSPTDEDEEDDESS) are disordered. The span at 950–959 (TDEDEEDDES) shows a compositional bias: acidic residues. The CNH domain occupies 1010–1297 (NSEILCAALW…KFLCERNDKV (288 aa)).

It belongs to the protein kinase superfamily. STE Ser/Thr protein kinase family. STE20 subfamily. In terms of assembly, interacts (via the CNH domain) with RAP2A (GTP-bound form preferentially); the interaction is direct and required for the activation of TNIK by RAP2A. Interacts with NEDD4; recruits RAP2A to NEDD4. Interacts with TRAF2 and NCK. Interacts with TCF7L2/TCF4 and CTNNB1; the interaction is direct. Interacts with TANC1. Post-translationally, autophosphorylated. Autophosphorylation is activated by RAP2A and induces association to the cytoskeletal fraction.

The protein localises to the nucleus. It is found in the cytoplasm. The protein resides in the recycling endosome. Its subcellular location is the cytoskeleton. It carries out the reaction L-seryl-[protein] + ATP = O-phospho-L-seryl-[protein] + ADP + H(+). The enzyme catalyses L-threonyl-[protein] + ATP = O-phospho-L-threonyl-[protein] + ADP + H(+). Serine/threonine kinase that acts as an essential activator of the Wnt signaling pathway. Recruited to promoters of Wnt target genes and required to activate their expression. May act by phosphorylating TCF4/TCF7L2. Appears to act upstream of the JUN N-terminal pathway. May play a role in the response to environmental stress. Part of a signaling complex composed of NEDD4, RAP2A and TNIK which regulates neuronal dendrite extension and arborization during development. More generally, it may play a role in cytoskeletal rearrangements and regulate cell spreading. Phosphorylates SMAD1 on Thr-322. Activator of the Hippo signaling pathway which plays a pivotal role in organ size control and tumor suppression by restricting proliferation and promoting apoptosis. MAP4Ks act in parallel to and are partially redundant with STK3/MST2 and STK4/MST2 in the phosphorylation and activation of LATS1/2, and establish MAP4Ks as components of the expanded Hippo pathway. This chain is Traf2 and NCK-interacting protein kinase (Tnik), found in Mus musculus (Mouse).